Reading from the N-terminus, the 186-residue chain is Adrenodoxin, mitochondrial (186 aa).

Residues 1 to 58 constitute a mitochondrion transit peptide; the sequence is MAARLLRVASAALGDTAGRWRLLARPRAGAGGLRGSRGPGLGGGAVATRTLSVSGRAQ. Ser-61 is subject to Phosphoserine. Residue Lys-64 is modified to N6-acetyllysine; alternate. Lys-64 is modified (N6-succinyllysine; alternate). The 2Fe-2S ferredoxin-type domain occupies 65–169; that stretch reads ITVHFINRDG…NMTVRVPDAV (105 aa). Residues Cys-104, Cys-110, Cys-113, and Cys-150 each contribute to the [2Fe-2S] cluster site. Lys-156 is modified (N6-succinyllysine). Ser-175 is modified (phosphoserine).

The protein belongs to the adrenodoxin/putidaredoxin family. As to quaternary structure, interacts with CYP11A1. [2Fe-2S] cluster is required as a cofactor. As to expression, detected in adrenal cortex and corpus luteum (at protein level).

The protein localises to the mitochondrion matrix. In terms of biological role, essential for the synthesis of various steroid hormones. Participates in the reduction of mitochondrial cytochrome P450 for steroidogenesis. Transfers electrons from adrenodoxin reductase to CYP11A1, a cytochrome P450 that catalyzes cholesterol side-chain cleavage to produce pregnenolone, the precursor of most steroid hormones. Does not form a ternary complex with adrenodoxin reductase and CYP11A1 but shuttles between the two enzymes to transfer electrons. The protein is Adrenodoxin, mitochondrial (FDX1) of Bos taurus (Bovine).